The sequence spans 21 residues: Ocellatin-2 (21 aa).

Ile-21 is subject to Isoleucine amide.

In terms of tissue distribution, expressed by the skin dorsal glands.

The protein resides in the secreted. In terms of biological role, has hemolytic activity against human erythrocytes and antibacterial activity against the Gram-negative bacterium E.coli. The sequence is that of Ocellatin-2 from Leptodactylus ocellatus (Argus frog).